We begin with the raw amino-acid sequence, 295 residues long: UDP-N-acetylenolpyruvoylglucosamine reductase (295 aa).

In terms of domain architecture, FAD-binding PCMH-type spans 24–188 (KVGGNAEIFF…LKAIFKANKG (165 aa)). Arg168 is a catalytic residue. Catalysis depends on Ser217, which acts as the Proton donor. Residue Glu287 is part of the active site.

Belongs to the MurB family. It depends on FAD as a cofactor.

It is found in the cytoplasm. It catalyses the reaction UDP-N-acetyl-alpha-D-muramate + NADP(+) = UDP-N-acetyl-3-O-(1-carboxyvinyl)-alpha-D-glucosamine + NADPH + H(+). The protein operates within cell wall biogenesis; peptidoglycan biosynthesis. Functionally, cell wall formation. This is UDP-N-acetylenolpyruvoylglucosamine reductase from Rickettsia typhi (strain ATCC VR-144 / Wilmington).